The following is a 910-amino-acid chain: MTKKTIQASCRKNKLYLTPHLNDVLYLHYSGYNAIDGLDEYVGLKCLWLECNAISNISGLDHQSQLRCLYLHNNLIKKIENLQHCKQLDTLNLSHNHIAKIENCGSDILPVLNTLNISHNYLKSIESLAELRKCDFVSVLDISHNRIEDIAIVKVLADMKGLRVLTLVGNPVVNDIPSYRKTLILECKSLTYLDSRPVFDKDRACAEAWKRGGYEEERKEHQRWKKEEQRKMRRSINATLRLRHRGDGEPELLKTSSDEEEEEKEGSAAGRGDFEELEYQSNDVAWKEMEALFNQHTKGDTQQAQKLAEERKASTNSVDYITGSDSNSDPTLVTDCDSCVRNSSRACSSRSDTSDSEDMFDKIVPKKHRKLASSMRPEVSLSDSSSSSSETEDEAGSILDSKLDRQNTITEFIDEYKRFFHSVDLRDPKCVLKNRHKIVRPQTAKSQRTEPIVYEGVLKAMEQNSNGAKIEQARQERFEANERSLAKEAVLERLMKGHAEVDMNIEQQMISIGGKQHNFNEYRLEVFRQDQEKLQNLIDRVTAQKEKYNAHIDSIHDQLANIMEDYGQISEKLRKVDDMIQNIGDEVVVHQEKERDGLEVIQELEPITIAEQIVENMTKEQVPDEVEANDKASDATIDPVDQLSSDESAIDLGELNQHVDAQVEVGPSDPKDATTSKPIPEEFGSDPVYRKFIDIQYEIDKLTEDQIFTALSEAARELQEEELETKLVHDAIDEYWSTDLEDFRRNLNLDAHPIVQRFKRFIECQGTDTDDTDSEAHVRRLENAYHRYERRLSNHLFDEYLMLSRKASIATTTGGESSATELELVELDGGHVLRASTSRRATAWDLKETVEDPVEELEELNEEEDPALKEAGDFKHDELEDEESKPEEKTLKSAEVLGMQEPLADVQGDH.

LRR repeat units lie at residues 43 to 64 (GLKC…DHQS), 65 to 86 (QLRC…QHCK), 87 to 108 (QLDT…GSDI), 111 to 132 (VLNT…AELR), and 136 to 157 (FVSV…KVLA). The LRRCT domain occupies 171–209 (PVVNDIPSYRKTLILECKSLTYLDSRPVFDKDRACAEAW). A compositionally biased stretch (basic and acidic residues) spans 217–230 (ERKEHQRWKKEEQR). 6 disordered regions span residues 217 to 275 (ERKE…GDFE), 297 to 332 (TKGD…DPTL), 344 to 399 (SRAC…GSIL), 620 to 642 (EQVP…PVDQ), 662 to 682 (QVEV…IPEE), and 855 to 910 (EELE…QGDH). Positions 314–331 (STNSVDYITGSDSNSDPT) are enriched in polar residues. Residues 380–389 (SLSDSSSSSS) show a composition bias toward low complexity. The span at 620–633 (EQVPDEVEANDKAS) shows a compositional bias: basic and acidic residues. Residues 855-865 (EELEELNEEED) are compositionally biased toward acidic residues. Residues 866–878 (PALKEAGDFKHDE) are compositionally biased toward basic and acidic residues.

The protein belongs to the DNAAF1 family.

It localises to the cell projection. Its subcellular location is the cilium. Cilium-specific protein required for cilia structures. The chain is Dynein axonemal assembly factor 1 homolog from Anopheles gambiae (African malaria mosquito).